A 333-amino-acid polypeptide reads, in one-letter code: Delta(9)-fatty-acid desaturase fat-5 (333 aa).

A run of 4 helical transmembrane segments spans residues N42–F62, W66–G86, L187–G207, and A210–W230.

It belongs to the fatty acid desaturase type 1 family. Expressed in the intestine in adult worms and in all four larval stages. Additional expression in the pharynx and tail cells after hatching and throughout the lifespan.

The protein localises to the membrane. It catalyses the reaction hexadecanoyl-CoA + 2 Fe(II)-[cytochrome b5] + O2 + 2 H(+) = (9Z)-hexadecenoyl-CoA + 2 Fe(III)-[cytochrome b5] + 2 H2O. The catalysed reaction is tetradecanoyl-CoA + 2 Fe(II)-[cytochrome b5] + O2 + 2 H(+) = (9Z)-tetradecenoyl-CoA + 2 Fe(III)-[cytochrome b5] + 2 H2O. It carries out the reaction heptadecanoyl-CoA + 2 Fe(II)-[cytochrome b5] + O2 + 2 H(+) = (9Z)-heptadecenoyl-CoA + 2 Fe(III)-[cytochrome b5] + 2 H2O. The enzyme catalyses pentadecanoyl-CoA + 2 Fe(II)-[cytochrome b5] + O2 + 2 H(+) = (9Z)-pentadecenoyl-CoA + 2 Fe(III)-[cytochrome b5] + 2 H2O. It participates in lipid metabolism; monounsaturated fatty acid biosynthesis. Its function is as follows. Delta(9)-fatty acid desaturase that acts preferentially on palmitoyl-CoA (hexadecanoyl-CoA) producing the monounsaturated palmitoleoyl-CoA ((9Z)-hexadecenoyl-CoA), which can be elongated to (11Z)-octadecenoyl-CoA (the most abundant monounsaturated fatty acid in Caenorhabditis elegans phospholipids and triacylglycerols). Also acts on pentadecanoyl-CoA, heptadecanoyl-CoA and myristoyl-CoA (tetradecanoyl-CoA), the monounsaturated fatty acids (MUFAs) produced are further used as substrates to synthesize polyunsaturated fatty acids (PUFAs) by several other desaturases and elongases. Unlike plants, Caenorhabditis elegans desaturases seem to use fatty acyl-CoAs as substrates. The protein is Delta(9)-fatty-acid desaturase fat-5 (fat-5) of Caenorhabditis elegans.